The primary structure comprises 410 residues: BRCA1-A complex subunit Abraxas 1 (410 aa).

Positions 7–160 (TAVLSGFVLG…HALYKPQKGL (154 aa)) constitute an MPN domain. Residue Ser48 is modified to Phosphoserine. Residues 208-261 (SLKEVQKINEMYTSLQDELKSICEKVEHSERAVEKLLNDVNRLKGEIKKRKQAQ) adopt a coiled-coil conformation. The segment at 354 to 410 (DGWQFKKSRLGGIQNRPSKTDTNSSNQEQASTVSSPETDEEIERMKGSGEYPQSPTF) is disordered. The span at 368–389 (NRPSKTDTNSSNQEQASTVSSP) shows a compositional bias: polar residues. A phosphoserine mark is found at Ser387 and Ser388. At Thr391 the chain carries Phosphothreonine. Phosphoserine is present on Ser407. Positions 407-410 (SPTF) match the pSXXF motif motif.

The protein belongs to the FAM175 family. Abraxas subfamily. In terms of assembly, component of the ARISC complex, at least composed of UIMC1/RAP80, ABRAXAS1, BRCC3/BRCC36, BABAM2 and BABAM1/NBA1. Component of the BRCA1-A complex, at least composed of the BRCA1, BARD1, UIMC1/RAP80, ABRAXAS1, BRCC3/BRCC36, BABAM2 and BABAM1/NBA1. In the complex, interacts directly with UIMC1/RAP80, BRCC3/BRCC36 and BABAM2. Homodimer. Interacts directly (when phosphorylated at Ser-407) with BRCA1. The phosphorylated homodimer can interact directly with two BRCA1 chains, giving rise to a heterotetramer. Binds polyubiquitin. Phosphorylation of Ser-407 of the pSXXF motif by ATM or ATR constitutes a specific recognition motif for the BRCT domain of BRCA1.

It localises to the nucleus. Its function is as follows. Involved in DNA damage response and double-strand break (DSB) repair. Component of the BRCA1-A complex, acting as a central scaffold protein that assembles the various components of the complex and mediates the recruitment of BRCA1. The BRCA1-A complex specifically recognizes 'Lys-63'-linked ubiquitinated histones H2A and H2AX at DNA lesion sites, leading to target the BRCA1-BARD1 heterodimer to sites of DNA damage at DSBs. This complex also possesses deubiquitinase activity that specifically removes 'Lys-63'-linked ubiquitin on histones H2A and H2AX. This chain is BRCA1-A complex subunit Abraxas 1, found in Bos taurus (Bovine).